A 375-amino-acid polypeptide reads, in one-letter code: CC-adding tRNA nucleotidyltransferase (375 aa).

Glycine 27–arginine 30 contacts CTP. Aspartate 40 and aspartate 42 together coordinate Mg(2+). CTP-binding positions include arginine 95–aspartate 96, asparagine 100, aspartate 137–arginine 146, and arginine 177.

This sequence belongs to the tRNA nucleotidyltransferase/poly(A) polymerase family. Mg(2+) is required as a cofactor.

It carries out the reaction a tRNA precursor + 2 CTP = a tRNA with a 3' CC end + 2 diphosphate. In terms of biological role, tRNA nucleotidyltransferase involved in the synthesis of the tRNA CCA terminus. Adds the two cytidine residues to tRNA. The polypeptide is CC-adding tRNA nucleotidyltransferase (Halalkalibacterium halodurans (strain ATCC BAA-125 / DSM 18197 / FERM 7344 / JCM 9153 / C-125) (Bacillus halodurans)).